Reading from the N-terminus, the 363-residue chain is 3-dehydroquinate synthase (363 aa).

Residues 107 to 111 (GVIGD), 131 to 132 (TT), Lys-144, and Lys-153 each bind NAD(+). Residues Glu-186, His-251, and His-268 each coordinate Zn(2+).

This sequence belongs to the sugar phosphate cyclases superfamily. Dehydroquinate synthase family. Requires Co(2+) as cofactor. It depends on Zn(2+) as a cofactor. The cofactor is NAD(+).

The protein localises to the cytoplasm. The enzyme catalyses 7-phospho-2-dehydro-3-deoxy-D-arabino-heptonate = 3-dehydroquinate + phosphate. The protein operates within metabolic intermediate biosynthesis; chorismate biosynthesis; chorismate from D-erythrose 4-phosphate and phosphoenolpyruvate: step 2/7. Catalyzes the conversion of 3-deoxy-D-arabino-heptulosonate 7-phosphate (DAHP) to dehydroquinate (DHQ). The sequence is that of 3-dehydroquinate synthase from Nostoc punctiforme (strain ATCC 29133 / PCC 73102).